Here is a 96-residue protein sequence, read N- to C-terminus: MASEEIIREVYKVLEERRDNPIDSYTSKIMQDSDKKAEDKILEKVAEECGEVLLAAKNDENLVYESVDLIFHTLLILVYKGIEIDEIFEEFARRRH.

Belongs to the PRA-PH family.

It is found in the cytoplasm. It carries out the reaction 1-(5-phospho-beta-D-ribosyl)-ATP + H2O = 1-(5-phospho-beta-D-ribosyl)-5'-AMP + diphosphate + H(+). It participates in amino-acid biosynthesis; L-histidine biosynthesis; L-histidine from 5-phospho-alpha-D-ribose 1-diphosphate: step 2/9. This Methanobrevibacter smithii (strain ATCC 35061 / DSM 861 / OCM 144 / PS) protein is Phosphoribosyl-ATP pyrophosphatase.